Here is a 193-residue protein sequence, read N- to C-terminus: Xanthine phosphoribosyltransferase (193 aa).

2 residues coordinate xanthine: Leu20 and Asn27. A 5-phospho-alpha-D-ribose 1-diphosphate-binding site is contributed by 128 to 132 (ANGEA). Position 156 (Lys156) interacts with xanthine.

It belongs to the purine/pyrimidine phosphoribosyltransferase family. Xpt subfamily. As to quaternary structure, homodimer.

The protein resides in the cytoplasm. It catalyses the reaction XMP + diphosphate = xanthine + 5-phospho-alpha-D-ribose 1-diphosphate. Its pathway is purine metabolism; XMP biosynthesis via salvage pathway; XMP from xanthine: step 1/1. In terms of biological role, converts the preformed base xanthine, a product of nucleic acid breakdown, to xanthosine 5'-monophosphate (XMP), so it can be reused for RNA or DNA synthesis. The chain is Xanthine phosphoribosyltransferase from Exiguobacterium sp. (strain ATCC BAA-1283 / AT1b).